The chain runs to 227 residues: Arginine ABC transporter permease protein ArtM (227 aa).

An ABC transmembrane type-1 domain is found at 13–209; it reads IPTSLLLTVV…IITGIATLLL (197 aa). 5 consecutive transmembrane segments (helical) span residues 17-37, 51-71, 78-98, 155-175, and 188-208; these read LLLT…LTFL, LYLT…IYAG, IIDS…ALAL, IILV…DIMG, and LTIY…ATLL.

Belongs to the binding-protein-dependent transport system permease family. HisMQ subfamily. As to quaternary structure, the complex is composed of two ATP-binding proteins (ArtP), two transmembrane proteins (ArtM and ArtQ) and a solute-binding protein (ArtI).

The protein resides in the cell inner membrane. In terms of biological role, part of the ABC transporter complex ArtPIQM involved in arginine transport. Probably responsible for the translocation of the substrate across the membrane. The polypeptide is Arginine ABC transporter permease protein ArtM (artM) (Haemophilus influenzae (strain ATCC 51907 / DSM 11121 / KW20 / Rd)).